The primary structure comprises 464 residues: MSLHFLYYCSEPTLDVKIAFCQGFDKHVDVSSVVKHYNMSKSKVDNQFYSVEVGDSTFTVLKRYQNLKPIGSGAQGIVCAAYDAVLDRNVAIKKLSRPFQNQTHAKRAYRELVLMKCVNHKNIISLLNVFTPQKTLEEFQDVYLVMELMDANLCQVIQMELDHERMSYLLYQMLCGIKHLHSAGIIHRDLKPSNIVVKSDCTLKILDFGLARTAGTSFMMTPYVVTRYYRAPEVILGMGYKENVDIWSVGCIMGEMVRHKILFPGRDYIDQWNKVIEQLGTPCPEFMKKLQPTVRNYVENRPKYAGLTFPKLFPDSLFPADSEHNKLKASQARDLLSKMLVIDPAKRISVDDALQHPYINVWYDPAEVEAPPPQIYDKQLDEREHTIEEWKELIYKEVMNSEEKTKNGVVKGQPSPSGAAVNSSESLPPSSSVNDISSMSTDQTLASDTDSSLEASAGPLGCCR.

The 296-residue stretch at 64-359 folds into the Protein kinase domain; sequence YQNLKPIGSG…VDDALQHPYI (296 aa). ATP is bound by residues 70–78 and Lys-93; that span reads IGSGAQGIV. Asp-189 acts as the Proton acceptor in catalysis. The residue at position 221 (Thr-221) is a Phosphothreonine; by MAP2K7. The short motif at 221–223 is the TXY element; that stretch reads TPY. Position 223 is a phosphotyrosine; by MAP2K4 (Tyr-223). Residues 405-464 are disordered; the sequence is TKNGVVKGQPSPSGAAVNSSESLPPSSSVNDISSMSTDQTLASDTDSSLEASAGPLGCCR. The segment covering 423-432 has biased composition (low complexity); sequence SSESLPPSSS. Residues 433 to 454 show a composition bias toward polar residues; it reads VNDISSMSTDQTLASDTDSSLE. Residues Cys-462 and Cys-463 are each lipidated (S-palmitoyl cysteine).

The protein belongs to the protein kinase superfamily. CMGC Ser/Thr protein kinase family. MAP kinase subfamily. Interacts with MAPK8IP1/JIP-1 and MAPK8IP3/JIP-3/JSAP1. Interacts with SPAG9/MAPK8IP4/JIP4. Interacts with HDAC9 and MAPKBP1. Interacts with ARRB2; the interaction enhances MAPK10 activation by MAP3K5. Interacts with SARM1. Interacts with JUND; interaction is inhibited in the presence of MEN1. The cofactor is Mg(2+). Dually phosphorylated on Thr-221 and Tyr-223 by MAP2K4 and MAP2K7, which activates the enzyme. MAP2K7 shows a strong preference for Thr-221 while MAP2K4 phosphorylates Tyr-223 preferentially. Weakly autophosphorylated on threonine and tyrosine residues in vitro. Post-translationally, palmitoylation regulates subcellular location and axonal development.

It is found in the cytoplasm. Its subcellular location is the membrane. The protein resides in the nucleus. The protein localises to the mitochondrion. The enzyme catalyses L-seryl-[protein] + ATP = O-phospho-L-seryl-[protein] + ADP + H(+). It carries out the reaction L-threonyl-[protein] + ATP = O-phospho-L-threonyl-[protein] + ADP + H(+). Its activity is regulated as follows. Activated by threonine and tyrosine phosphorylation by two dual specificity kinases, MAP2K4 and MAP2K7. MAP2K7 phosphorylates MAPK10 on Thr-221 causing a conformational change and a large increase in Vmax for the enzyme. MAP2K4 then phosphorylates Tyr-223 resulting in a further increase in Vmax. Inhibited by dual specificity phosphatases, such as DUSP1. Inhibited by HDAC9. Functionally, serine/threonine-protein kinase involved in various processes such as neuronal proliferation, differentiation, migration and programmed cell death. Extracellular stimuli such as pro-inflammatory cytokines or physical stress stimulate the stress-activated protein kinase/c-Jun N-terminal kinase (SAP/JNK) signaling pathway. In this cascade, two dual specificity kinases MAP2K4/MKK4 and MAP2K7/MKK7 phosphorylate and activate MAPK10/JNK3. In turn, MAPK10/JNK3 phosphorylates a number of transcription factors, primarily components of AP-1 such as JUN and ATF2 and thus regulates AP-1 transcriptional activity. Plays regulatory roles in the signaling pathways during neuronal apoptosis. Phosphorylates the neuronal microtubule regulator STMN2. Acts in the regulation of the amyloid-beta precursor protein/APP signaling during neuronal differentiation by phosphorylating APP. Also participates in neurite growth in spiral ganglion neurons. Phosphorylates the CLOCK-BMAL1 heterodimer and plays a role in the photic regulation of the circadian clock. Phosphorylates JUND and this phosphorylation is inhibited in the presence of MEN1. This Rattus norvegicus (Rat) protein is Mitogen-activated protein kinase 10 (Mapk10).